The primary structure comprises 393 residues: Riboflavin biosynthesis protein RibBA (393 aa).

The interval 1-200 (MQLDSIDTAL…IEDLEKYRKS (200 aa)) is DHBP synthase. Residues 27–28 (RE), Asp-32, 139–143 (RRGHT), and Glu-163 contribute to the D-ribulose 5-phosphate site. Glu-28 is a Mg(2+) binding site. His-142 serves as a coordination point for Mg(2+). Positions 201–393 (SISKLDAKAK…TKKEKMGHLI (193 aa)) are GTP cyclohydrolase II. 249–253 (RIHSA) provides a ligand contact to GTP. Zn(2+) is bound by residues Cys-254, Cys-265, and Cys-267. GTP contacts are provided by residues Gln-270, 291 to 293 (EGR), and Thr-313. Asp-325 acts as the Proton acceptor; for GTP cyclohydrolase activity in catalysis. Arg-327 acts as the Nucleophile; for GTP cyclohydrolase activity in catalysis. GTP is bound by residues Ser-348 and Lys-353.

It in the N-terminal section; belongs to the DHBP synthase family. In the C-terminal section; belongs to the GTP cyclohydrolase II family. Mg(2+) serves as cofactor. The cofactor is Mn(2+). Requires Zn(2+) as cofactor.

The catalysed reaction is D-ribulose 5-phosphate = (2S)-2-hydroxy-3-oxobutyl phosphate + formate + H(+). It carries out the reaction GTP + 4 H2O = 2,5-diamino-6-hydroxy-4-(5-phosphoribosylamino)-pyrimidine + formate + 2 phosphate + 3 H(+). The protein operates within cofactor biosynthesis; riboflavin biosynthesis; 2-hydroxy-3-oxobutyl phosphate from D-ribulose 5-phosphate: step 1/1. Its pathway is cofactor biosynthesis; riboflavin biosynthesis; 5-amino-6-(D-ribitylamino)uracil from GTP: step 1/4. Functionally, catalyzes the conversion of D-ribulose 5-phosphate to formate and 3,4-dihydroxy-2-butanone 4-phosphate. Catalyzes the conversion of GTP to 2,5-diamino-6-ribosylamino-4(3H)-pyrimidinone 5'-phosphate (DARP), formate and pyrophosphate. The polypeptide is Riboflavin biosynthesis protein RibBA (Staphylococcus saprophyticus subsp. saprophyticus (strain ATCC 15305 / DSM 20229 / NCIMB 8711 / NCTC 7292 / S-41)).